The following is a 451-amino-acid chain: NADH-quinone oxidoreductase subunit D (451 aa).

The protein belongs to the complex I 49 kDa subunit family. NDH-1 is composed of 14 different subunits. Subunits NuoB, C, D, E, F, and G constitute the peripheral sector of the complex.

The protein localises to the cell inner membrane. It catalyses the reaction a quinone + NADH + 5 H(+)(in) = a quinol + NAD(+) + 4 H(+)(out). Functionally, NDH-1 shuttles electrons from NADH, via FMN and iron-sulfur (Fe-S) centers, to quinones in the respiratory chain. The immediate electron acceptor for the enzyme in this species is believed to be a menaquinone. Couples the redox reaction to proton translocation (for every two electrons transferred, four hydrogen ions are translocated across the cytoplasmic membrane), and thus conserves the redox energy in a proton gradient. This Salinibacter ruber (strain DSM 13855 / M31) protein is NADH-quinone oxidoreductase subunit D.